The sequence spans 386 residues: MADSCRNLTYVRGSVGPATSTLMFVAGVVGNGLALGILSARRPARPSAFAVLVTGLAATDLLGTSFLSPAVFVAYARNSSLLGLARGGPALCDAFAFAMTFFGLASMLILFAMAVERCLALSHPYLYAQLDGPRCARLALPAIYAFCVLFCALPLLGLGQHQQYCPGSWCFLRMRWAQPGGAAFSLAYAGLVALLVAAIFLCNGSVTLSLCRMYRQQKRHQGSLGPRPRTGEDEVDHLILLALMTVVMAVCSLPLTIRCFTQAVAPDSSSEMGDLLAFRFYAFNPILDPWVFILFRKAVFQRLKLWVCCLCLGPAHGDSQTPLSQLASGRRDPRAPSAPVGKEGSCVPLSAWGEGQVEPLPPTQQSSGSAVGTSSKAEASVACSLC.

Residues methionine 1–glycine 16 lie on the Extracellular side of the membrane. Disulfide bonds link cysteine 5–cysteine 165 and cysteine 92–cysteine 170. The N-linked (GlcNAc...) asparagine glycan is linked to asparagine 7. The helical transmembrane segment at proline 17 to leucine 38 threads the bilayer. Over serine 39–valine 51 the chain is Cytoplasmic. The chain crosses the membrane as a helical span at residues leucine 52–alanine 76. The Extracellular portion of the chain corresponds to arginine 77–alanine 94. Residues phenylalanine 95–valine 115 traverse the membrane as a helical segment. Residues glutamate 116 to arginine 134 are Cytoplasmic-facing. A helical membrane pass occupies residues cysteine 135 to leucine 158. Over glycine 159 to glycine 181 the chain is Extracellular. The chain crosses the membrane as a helical span at residues alanine 182–leucine 208. Residues serine 209 to valine 235 lie on the Cytoplasmic side of the membrane. A helical membrane pass occupies residues aspartate 236–phenylalanine 260. At threonine 261 to aspartate 274 the chain is on the extracellular side. A helical membrane pass occupies residues leucine 275–phenylalanine 295. The Cytoplasmic segment spans residues arginine 296–cysteine 386. The interval proline 322 to lysine 376 is disordered. Positions threonine 363 to lysine 376 are enriched in polar residues. Residue cysteine 383 is modified to Cysteine methyl ester. A lipid anchor (S-farnesyl cysteine) is attached at cysteine 383. The propeptide at serine 384 to cysteine 386 is removed in mature form.

It belongs to the G-protein coupled receptor 1 family. In terms of assembly, interacts (non-isoprenylated C-terminus) with PDZK1. In terms of processing, isoprenylation does not influence ligand binding but is required for efficient coupling to the effectors adenylyl cyclase and phospholipase C.

Its subcellular location is the cell membrane. Its function is as follows. Receptor for prostacyclin (prostaglandin I2 or PGI2). The activity of this receptor is mediated by G(s) proteins which activate adenylate cyclase. The sequence is that of Prostacyclin receptor (PTGIR) from Homo sapiens (Human).